A 127-amino-acid polypeptide reads, in one-letter code: MENERKYSIKVEVRTIYLPDQSDPEAERYVFAYTITINNTGSVASQLVSRHWIITSGDGVTREVRGLGVVGEQPLLKPGETFEYTSGTAISSIAGSMKGSYQMVAEDGFHFSVEIPEFILSVPRVLH.

Residues 3 to 127 (NERKYSIKVE…FILSVPRVLH (125 aa)) enclose the ApaG domain.

This Nitrosomonas europaea (strain ATCC 19718 / CIP 103999 / KCTC 2705 / NBRC 14298) protein is Protein ApaG.